The chain runs to 379 residues: MSVRTLPLLFLNLGGEMLYVLDQRLRAQNIPGDKARKVLNDIISTMFNRKFTEELFKPQELYSKKALRTVYDRLAHASIMRLNQASMDKLYDLMTMAFKYQVLLCPRPKDVLLVTFNHLDSIKGFIQDSPTIIHQVDETFRQLTEIYGSLSAGEFQLIRQTLLIFFQDLHIRVSTFLKDKVQNSNGRFVLPVSGPVPWGIEVPGVIRVFNDKGDEVKRMEFRHGGDYVAAHKEGSFELYGDRVLKLGTNMYSASRPVETHMSATSKNSASRAQENIAPNPLAKEELNFLARLIGGMEIKKPSGPEPGFRLNLFTTDEEEEHAALSRPEELSYEVISIQATQDQQRSEELARIMEEFEMTEQPERNTSKGDDLLAMMDRL.

Predominantly expressed in testis.

The protein resides in the basal cell membrane. In terms of biological role, may be involved in drug clearance in the placenta. The chain is Protein OSCP1 (Oscp1) from Rattus norvegicus (Rat).